The sequence spans 415 residues: Ubp4-interactor sfp47 (415 aa).

2 positions are modified to phosphoserine: serine 221 and serine 226. The residue at position 231 (threonine 231) is a Phosphothreonine. Serine 235 carries the post-translational modification Phosphoserine. Positions proline 352–tyrosine 415 constitute an SH3 domain.

In terms of assembly, interacts with ubp4.

It localises to the cytoplasm. The protein localises to the endosome. In terms of biological role, required for the regulation of activity and recruitment of ubp4 to endosomes. The polypeptide is Ubp4-interactor sfp47 (sfp47) (Schizosaccharomyces pombe (strain 972 / ATCC 24843) (Fission yeast)).